A 119-amino-acid chain; its full sequence is Ribonuclease P protein component (119 aa).

Belongs to the RnpA family. Consists of a catalytic RNA component (M1 or rnpB) and a protein subunit.

It catalyses the reaction Endonucleolytic cleavage of RNA, removing 5'-extranucleotides from tRNA precursor.. In terms of biological role, RNaseP catalyzes the removal of the 5'-leader sequence from pre-tRNA to produce the mature 5'-terminus. It can also cleave other RNA substrates such as 4.5S RNA. The protein component plays an auxiliary but essential role in vivo by binding to the 5'-leader sequence and broadening the substrate specificity of the ribozyme. The polypeptide is Ribonuclease P protein component (Bacillus cereus (strain ZK / E33L)).